Consider the following 749-residue polypeptide: Poly(U)-binding-splicing factor rnp-6 (749 aa).

RRM domains follow at residues 102–176 (SRIY…LKVN) and 207–285 (FRVY…KCVT). Disordered stretches follow at residues 323-388 (AGSS…PDVV) and 457-480 (IEEE…KMKR). Over residues 330–354 (PSESGGSRAASPAPRAQSPATPSSS) the composition is skewed to low complexity. Positions 658-739 (NVIVLRNMVT…NTVKAEAYDQ (82 aa)) constitute an RRM 3; atypical domain.

The protein belongs to the RRM half pint family.

It localises to the nucleus. In terms of biological role, DNA- and RNA-binding protein, involved in several nuclear processes such as pre-mRNA splicing, apoptosis and transcription regulation. Ensures the correct splicing of genes involved in immunity to promote longevity in response to infection by pathogenic bacteria such as S.aureus. The sequence is that of Poly(U)-binding-splicing factor rnp-6 from Caenorhabditis elegans.